The chain runs to 73 residues: Cytochrome b559 subunit alpha (73 aa).

The helical transmembrane segment at I21–W35 threads the bilayer. Heme is bound at residue H23.

This sequence belongs to the PsbE/PsbF family. As to quaternary structure, heterodimer of an alpha subunit and a beta subunit. PSII is composed of 1 copy each of membrane proteins PsbA, PsbB, PsbC, PsbD, PsbE, PsbF, PsbH, PsbI, PsbJ, PsbK, PsbL, PsbM, PsbT, PsbY, PsbZ, Psb30/Ycf12, at least 3 peripheral proteins of the oxygen-evolving complex and a large number of cofactors. It forms dimeric complexes. The cofactor is heme b.

It is found in the plastid. It localises to the chloroplast thylakoid membrane. In terms of biological role, this b-type cytochrome is tightly associated with the reaction center of photosystem II (PSII). PSII is a light-driven water:plastoquinone oxidoreductase that uses light energy to abstract electrons from H(2)O, generating O(2) and a proton gradient subsequently used for ATP formation. It consists of a core antenna complex that captures photons, and an electron transfer chain that converts photonic excitation into a charge separation. The polypeptide is Cytochrome b559 subunit alpha (Bigelowiella natans (Pedinomonas minutissima)).